Here is a 307-residue protein sequence, read N- to C-terminus: Protoheme IX farnesyltransferase (307 aa).

9 helical membrane-spanning segments follow: residues 31-51, 53-73, 103-123, 125-145, 153-173, 179-199, 223-243, 246-266, and 285-305; these read VTQL…PGMV, WPVL…AFAI, TLVF…VYAN, LTMW…TILL, IVIG…AVAG, AWFL…ALAL, LLHI…PFVY, SGYI…AYAW, and ILYL…KFVP.

This sequence belongs to the UbiA prenyltransferase family. Protoheme IX farnesyltransferase subfamily.

The protein resides in the cell inner membrane. It catalyses the reaction heme b + (2E,6E)-farnesyl diphosphate + H2O = Fe(II)-heme o + diphosphate. Its pathway is porphyrin-containing compound metabolism; heme O biosynthesis; heme O from protoheme: step 1/1. Functionally, converts heme B (protoheme IX) to heme O by substitution of the vinyl group on carbon 2 of heme B porphyrin ring with a hydroxyethyl farnesyl side group. This is Protoheme IX farnesyltransferase from Cupriavidus taiwanensis (strain DSM 17343 / BCRC 17206 / CCUG 44338 / CIP 107171 / LMG 19424 / R1) (Ralstonia taiwanensis (strain LMG 19424)).